Reading from the N-terminus, the 334-residue chain is Galactinol synthase 3 (334 aa).

The active site involves Lys97. Mn(2+) is bound by residues Asp113, Asp115, and His251.

This sequence belongs to the glycosyltransferase 8 family. Galactosyltransferase subfamily. The cofactor is a divalent metal cation.

Its subcellular location is the cytoplasm. The enzyme catalyses myo-inositol + UDP-alpha-D-galactose = alpha-D-galactosyl-(1-&gt;3)-1D-myo-inositol + UDP + H(+). Galactinol synthase involved in the biosynthesis of raffinose family oligosaccharides (RFOs) that function as osmoprotectants. May promote plant stress tolerance. This Arabidopsis thaliana (Mouse-ear cress) protein is Galactinol synthase 3 (GOLS3).